A 228-amino-acid polypeptide reads, in one-letter code: Demethylmenaquinone methyltransferase (228 aa).

S-adenosyl-L-methionine contacts are provided by residues Thr62, Asp80, 100 to 101 (DA), and Ser117.

This sequence belongs to the class I-like SAM-binding methyltransferase superfamily. MenG/UbiE family.

It catalyses the reaction a 2-demethylmenaquinol + S-adenosyl-L-methionine = a menaquinol + S-adenosyl-L-homocysteine + H(+). Its pathway is quinol/quinone metabolism; menaquinone biosynthesis; menaquinol from 1,4-dihydroxy-2-naphthoate: step 2/2. In terms of biological role, methyltransferase required for the conversion of demethylmenaquinol (DMKH2) to menaquinol (MKH2). In Mycolicibacterium vanbaalenii (strain DSM 7251 / JCM 13017 / BCRC 16820 / KCTC 9966 / NRRL B-24157 / PYR-1) (Mycobacterium vanbaalenii), this protein is Demethylmenaquinone methyltransferase.